The sequence spans 93 residues: MGRSLKKGPFADAHLLKKIEAQADNDKKTVIRTWSRRSTIFPSFIGYTIAVYDGRKHVPVFVSEDMVGHKLGEFVPTRTFRGHNTDDKKTTAR.

The protein belongs to the universal ribosomal protein uS19 family.

In terms of biological role, protein S19 forms a complex with S13 that binds strongly to the 16S ribosomal RNA. The chain is Small ribosomal subunit protein uS19 from Lacticaseibacillus paracasei (strain ATCC 334 / BCRC 17002 / CCUG 31169 / CIP 107868 / KCTC 3260 / NRRL B-441) (Lactobacillus paracasei).